The sequence spans 288 residues: 2-methoxy-6-polyprenyl-1,4-benzoquinol methylase, mitochondrial (288 aa).

S-adenosyl-L-methionine-binding residues include Thr68, Asp102, and Ser146. A compositionally biased stretch (low complexity) spans 260–270; that stretch reads PITPTTSSDIP. The tract at residues 260-288 is disordered; that stretch reads PITPTTSSDIPAQNTSEATCEVKPEPNSA. The segment covering 279 to 288 has biased composition (basic and acidic residues); it reads CEVKPEPNSA.

This sequence belongs to the class I-like SAM-binding methyltransferase superfamily. MenG/UbiE family. In terms of assembly, component of a multi-subunit COQ enzyme complex.

It localises to the mitochondrion inner membrane. The catalysed reaction is a 2-methoxy-6-(all-trans-polyprenyl)benzene-1,4-diol + S-adenosyl-L-methionine = a 5-methoxy-2-methyl-3-(all-trans-polyprenyl)benzene-1,4-diol + S-adenosyl-L-homocysteine + H(+). It participates in cofactor biosynthesis; ubiquinone biosynthesis. Functionally, methyltransferase required for the conversion of 2-polyprenyl-6-methoxy-1,4-benzoquinol (DDMQH2) to 2-polyprenyl-3-methyl-6-methoxy-1,4-benzoquinol (DMQH2). The polypeptide is 2-methoxy-6-polyprenyl-1,4-benzoquinol methylase, mitochondrial (Leishmania donovani).